Consider the following 215-residue polypeptide: FGFR1 oncogene partner 2 homolog (215 aa).

A coiled-coil region spans residues 12–186 (AKELVERLRE…REILQITKIS (175 aa)). The tract at residues 193–215 (EDASENSPHSAPVPNTDLILRKS) is disordered.

The protein belongs to the SIKE family.

Its subcellular location is the cytoplasm. The sequence is that of FGFR1 oncogene partner 2 homolog (fgfr1op2) from Xenopus laevis (African clawed frog).